We begin with the raw amino-acid sequence, 90 residues long: Small ribosomal subunit protein bS20 (90 aa).

Belongs to the bacterial ribosomal protein bS20 family.

Binds directly to 16S ribosomal RNA. This is Small ribosomal subunit protein bS20 from Mesomycoplasma hyopneumoniae (strain J / ATCC 25934 / NCTC 10110) (Mycoplasma hyopneumoniae).